A 170-amino-acid chain; its full sequence is Ubiquitin-conjugating enzyme E2 G1 (170 aa).

Met1 is modified (N-acetylmethionine). Thr2 is modified (N-acetylthreonine; in Ubiquitin-conjugating enzyme E2 G1, N-terminally processed). In terms of domain architecture, UBC core spans 5–166 (QSALLLRRQL…VARCVRKSQE (162 aa)). Cys90 acts as the Glycyl thioester intermediate in catalysis.

The protein belongs to the ubiquitin-conjugating enzyme family. Autoubiquitinated in vitro. Widely expressed, mainly in skeletal muscle.

It catalyses the reaction S-ubiquitinyl-[E1 ubiquitin-activating enzyme]-L-cysteine + [E2 ubiquitin-conjugating enzyme]-L-cysteine = [E1 ubiquitin-activating enzyme]-L-cysteine + S-ubiquitinyl-[E2 ubiquitin-conjugating enzyme]-L-cysteine.. The protein operates within protein modification; protein ubiquitination. In terms of biological role, accepts ubiquitin from the E1 complex and catalyzes its covalent attachment to other proteins. In vitro catalyzes 'Lys-48'-, as well as 'Lys-63'-linked polyubiquitination. May be involved in degradation of muscle-specific proteins. Mediates polyubiquitination of CYP3A4. In Homo sapiens (Human), this protein is Ubiquitin-conjugating enzyme E2 G1 (UBE2G1).